Consider the following 160-residue polypeptide: Keratin-associated protein 9-6 (160 aa).

16 consecutive repeat copies span residues 4–8, 13–17, 18–22, 37–41, 42–46, 47–51, 56–60, 61–65, 66–70, 75–79, 80–84, 90–94, 95–99, 140–144, 149–153, and 154–158. Residues 4-158 form a 16 X 5 AA repeats of C-C-[GSVRQ]-[QTSPHN]-[TPSGYC] region; that stretch reads CCSPGCQPTC…CCVSSCCQHS (155 aa).

This sequence belongs to the KRTAP type 9 family. As to quaternary structure, interacts with hair keratins.

Functionally, in the hair cortex, hair keratin intermediate filaments are embedded in an interfilamentous matrix, consisting of hair keratin-associated proteins (KRTAP), which are essential for the formation of a rigid and resistant hair shaft through their extensive disulfide bond cross-linking with abundant cysteine residues of hair keratins. The matrix proteins include the high-sulfur and high-glycine-tyrosine keratins. This Homo sapiens (Human) protein is Keratin-associated protein 9-6.